A 229-amino-acid polypeptide reads, in one-letter code: Ribonuclease 3 (229 aa).

The 123-residue stretch at 8 to 130 (LTELEKIVGY…IIGAIYLDSD (123 aa)) folds into the RNase III domain. Glu-43 provides a ligand contact to Mg(2+). Residue Asp-47 is part of the active site. Residues Asp-116 and Glu-119 each contribute to the Mg(2+) site. Residue Glu-119 is part of the active site. The 71-residue stretch at 157 to 227 (DPKTRLQELL…ATAALEHLQE (71 aa)) folds into the DRBM domain. Positions 201–229 (SPFKGTGTSRRKAEQAAATAALEHLQESA) are disordered.

This sequence belongs to the ribonuclease III family. In terms of assembly, homodimer. It depends on Mg(2+) as a cofactor.

The protein resides in the cytoplasm. The enzyme catalyses Endonucleolytic cleavage to 5'-phosphomonoester.. Its function is as follows. Digests double-stranded RNA. Involved in the processing of primary rRNA transcript to yield the immediate precursors to the large and small rRNAs (23S and 16S). Processes some mRNAs, and tRNAs when they are encoded in the rRNA operon. Processes pre-crRNA and tracrRNA of type II CRISPR loci if present in the organism. The sequence is that of Ribonuclease 3 from Idiomarina loihiensis (strain ATCC BAA-735 / DSM 15497 / L2-TR).